The primary structure comprises 20 residues: Putative antimicrobial protein 2 (20 aa).

The segment at 1-20 (DLPECCSATELELDSGKQTS) is disordered.

Functionally, may have antimicrobial activity. This chain is Putative antimicrobial protein 2, found in Cenchritis muricatus (Beaded periwinkle).